The following is a 118-amino-acid chain: T cell receptor gamma variable 2 (118 aa).

The N-terminal stretch at Met-1–Gln-17 is a signal peptide. Residues Lys-18–Gly-118 form the Ig-like domain. Residues Cys-41 and Cys-113 are joined by a disulfide bond.

As to quaternary structure, gamma-delta TR is a heterodimer composed of a gamma and delta chain; disulfide-linked. The gamma-delta TR is associated with the transmembrane signaling CD3 coreceptor proteins following the stoichiometry: a single gamma-delta TR heterodimer associates with one CD3D-CD3E heterodimer, one CD3G-CD3E heterodimer and one CD247 homodimer forming a stable octameric structure. Upon activation, gamma-delta TR complex associates with FCER1G to initiate intracellular signaling.

Its subcellular location is the cell membrane. In terms of biological role, v region of the variable domain of T cell receptor (TR) gamma chain that participates in the antigen recognition. Gamma-delta TRs recognize a variety of self and foreign non-peptide antigens frequently expressed at the epithelial boundaries between the host and external environment, including endogenous lipids presented by MH-like protein CD1D and phosphoantigens presented by butyrophilin-like molecule BTN3A1. Upon antigen recognition induces rapid, innate-like immune responses involved in pathogen clearance and tissue repair. Binding of gamma-delta TR complex to antigen triggers phosphorylation of immunoreceptor tyrosine-based activation motifs (ITAMs) in the CD3 chains by the LCK and FYN kinases, allowing the recruitment, phosphorylation, and activation of ZAP70 that facilitates phosphorylation of the scaffolding proteins LCP2 and LAT. This lead to the formation of a supramolecular signalosome that recruits the phospholipase PLCG1, resulting in calcium mobilization and ERK activation, ultimately leading to T cell expansion and differentiation into effector cells. Gamma-delta TRs are produced through somatic rearrangement of a limited repertoire of variable (V), diversity (D), and joining (J) genes. The potential diversity of gamma-delta TRs is conferred by the unique ability to rearrange (D) genes in tandem and to utilize all three reading frames. The combinatorial diversity is considerably increased by the sequence exonuclease trimming and random nucleotide (N) region additions which occur during the V-(D)-J rearrangements. The chain is T cell receptor gamma variable 2 from Homo sapiens (Human).